Reading from the N-terminus, the 326-residue chain is 5-dehydro-2-deoxygluconokinase (326 aa).

Belongs to the carbohydrate kinase PfkB family.

It catalyses the reaction 5-dehydro-2-deoxy-D-gluconate + ATP = 6-phospho-5-dehydro-2-deoxy-D-gluconate + ADP + H(+). Its pathway is polyol metabolism; myo-inositol degradation into acetyl-CoA; acetyl-CoA from myo-inositol: step 5/7. In terms of biological role, catalyzes the phosphorylation of 5-dehydro-2-deoxy-D-gluconate (2-deoxy-5-keto-D-gluconate or DKG) to 6-phospho-5-dehydro-2-deoxy-D-gluconate (DKGP). This chain is 5-dehydro-2-deoxygluconokinase, found in Shouchella clausii (strain KSM-K16) (Alkalihalobacillus clausii).